Consider the following 824-residue polypeptide: AMP deaminase 2 (824 aa).

The segment at 1 to 43 (MASYPGPGKSKAKYPFKKRAGLQASAAAPEARSGLGASPLQSA) is disordered. Residues 10–20 (SKAKYPFKKRA) are compositionally biased toward basic residues. At R44 the chain carries Omega-N-methylarginine. 3 positions are modified to phosphoserine: S45, S63, and S79. Residue Y90 is modified to Phosphotyrosine. Phosphoserine is present on residues S96 and S113. T133 is subject to Phosphothreonine. Phosphoserine is present on residues S135 and S137. Residues H364 and H366 each contribute to the Zn(2+) site. Substrate contacts are provided by residues H366 and 435 to 440 (KFNAKY). H633 serves as a coordination point for Zn(2+). E636 contacts substrate. H655 (proton acceptor) is an active-site residue. D710 contributes to the Zn(2+) binding site. 711–714 (DPLQ) serves as a coordination point for substrate.

The protein belongs to the metallo-dependent hydrolases superfamily. Adenosine and AMP deaminases family. Homotetramer. The cofactor is Zn(2+).

It carries out the reaction AMP + H2O + H(+) = IMP + NH4(+). It functions in the pathway purine metabolism; IMP biosynthesis via salvage pathway; IMP from AMP: step 1/1. Functionally, AMP deaminase plays a critical role in energy metabolism. Catalyzes the deamination of AMP to IMP and plays an important role in the purine nucleotide cycle. The protein is AMP deaminase 2 of Mus musculus (Mouse).